The primary structure comprises 322 residues: HPr kinase/phosphorylase (322 aa).

Residues H146 and K167 contribute to the active site. ATP is bound at residue 161–168 (GDSGLGKS). Residue S168 coordinates Mg(2+). The Proton acceptor; for phosphorylation activity. Proton donor; for dephosphorylation activity role is filled by D185. The segment at 209–218 (LEVRGLGLLD) is important for the catalytic mechanism of both phosphorylation and dephosphorylation. Position 210 (E210) interacts with Mg(2+). Residue R250 is part of the active site. The important for the catalytic mechanism of dephosphorylation stretch occupies residues 271 to 276 (QVAAGR).

Belongs to the HPrK/P family. In terms of assembly, homohexamer. Mg(2+) is required as a cofactor.

It carries out the reaction [HPr protein]-L-serine + ATP = [HPr protein]-O-phospho-L-serine + ADP + H(+). The catalysed reaction is [HPr protein]-O-phospho-L-serine + phosphate + H(+) = [HPr protein]-L-serine + diphosphate. Functionally, catalyzes the ATP- as well as the pyrophosphate-dependent phosphorylation of a specific serine residue in HPr, a phosphocarrier protein of the phosphoenolpyruvate-dependent sugar phosphotransferase system (PTS). HprK/P also catalyzes the pyrophosphate-producing, inorganic phosphate-dependent dephosphorylation (phosphorolysis) of seryl-phosphorylated HPr (P-Ser-HPr). In Burkholderia cenocepacia (strain HI2424), this protein is HPr kinase/phosphorylase.